An 870-amino-acid chain; its full sequence is Leucine--tRNA ligase (870 aa).

The short motif at Pro-42 to His-52 is the 'HIGH' region element. The 'KMSKS' region signature appears at Lys-629–Ser-633. Lys-632 is a binding site for ATP.

The protein belongs to the class-I aminoacyl-tRNA synthetase family.

It localises to the cytoplasm. The enzyme catalyses tRNA(Leu) + L-leucine + ATP = L-leucyl-tRNA(Leu) + AMP + diphosphate. In Dechloromonas aromatica (strain RCB), this protein is Leucine--tRNA ligase.